The primary structure comprises 402 residues: CCA-adding enzyme (402 aa).

The ATP site is built by Gly32 and Arg35. Residues Gly32 and Arg35 each contribute to the CTP site. Asp45 and Asp47 together coordinate Mg(2+). The ATP site is built by Arg116, Asp159, Arg162, Arg165, and Arg168. The CTP site is built by Arg116, Asp159, Arg162, Arg165, and Arg168.

This sequence belongs to the tRNA nucleotidyltransferase/poly(A) polymerase family. Bacterial CCA-adding enzyme type 3 subfamily. In terms of assembly, homodimer. Mg(2+) is required as a cofactor.

The enzyme catalyses a tRNA precursor + 2 CTP + ATP = a tRNA with a 3' CCA end + 3 diphosphate. It carries out the reaction a tRNA with a 3' CCA end + 2 CTP + ATP = a tRNA with a 3' CCACCA end + 3 diphosphate. In terms of biological role, catalyzes the addition and repair of the essential 3'-terminal CCA sequence in tRNAs without using a nucleic acid template. Adds these three nucleotides in the order of C, C, and A to the tRNA nucleotide-73, using CTP and ATP as substrates and producing inorganic pyrophosphate. tRNA 3'-terminal CCA addition is required both for tRNA processing and repair. Also involved in tRNA surveillance by mediating tandem CCA addition to generate a CCACCA at the 3' terminus of unstable tRNAs. While stable tRNAs receive only 3'-terminal CCA, unstable tRNAs are marked with CCACCA and rapidly degraded. The polypeptide is CCA-adding enzyme (Streptococcus agalactiae serotype III (strain NEM316)).